Here is a 467-residue protein sequence, read N- to C-terminus: Chlorophenol O-methyltransferase (467 aa).

Residues 1–41 (MAELRAPSSLSTERNGSASNTDVDKQKLNHLYQNGNKKTGS) are disordered. Polar residues-rich tracts occupy residues 8-21 (SSLSTERNGSASNT) and 31-41 (LYQNGNKKTGS). Asp320 contributes to the S-adenosyl-L-methionine binding site. The active-site Proton acceptor is the His368.

Belongs to the class I-like SAM-binding methyltransferase superfamily. Cation-independent O-methyltransferase family.

The catalysed reaction is 2,4,6-trichlorophenol + S-adenosyl-L-methionine = 2,4,6-trichloroanisole + S-adenosyl-L-homocysteine. With respect to regulation, S-adenosyl-L-homocysteine acts as a competitive inhibitor. Also strongly inhibited by low concentrations of several metal ions, such as Cu(2+), Hg(2+), Zn(2+), and Ag(+), and to a lesser extent by p-chloromercuribenzoic acid, but it is not significantly affected by several thiols or other thiol reagents. Chlorophenol O-methyltransferase that methylates chlorophenols into chloroanisoles which are thought to be responsible for cork taint of wines. The only single chlorophenol (CP) methylated is 2-CP; neither 3-CP nor 4-CP are effective substrates. Within the dichlorophenols (DCPs), 2,4-DCP supports the highest rate of O-methylation, and the activity decreases in the following order: 2,3-DCP, 2,5-DCP, 2,6-DCP, and 3,4-DCP. Within the trichlorophenol (TCP) group, the maximal activity is observed with 2,3,4-TCP, whereas there is increasingly reduced activity with 2,4,5-TCP, 2,4,6-TCP, and 2,3,6-TCP. The only tetrachlorophenol (TeCP) that is methylated is 2,3,4,5-TeCP, since no activity can be detected with 2,3,4,6-TeCP and 2,3,5,6-TeCP. Is also able to methylate other halogenated phenols containing fluoro or bromo substituents, whereas other hydroxylated compounds, such as hydroxylated benzoic acids, hydroxybenzaldehydes, phenol, 2-metoxyphenol, and dihydroxybenzene, were not methylated. In Trichoderma longibrachiatum, this protein is Chlorophenol O-methyltransferase.